Reading from the N-terminus, the 107-residue chain is Nucleoid-associated protein A1E_05550 (107 aa).

This sequence belongs to the YbaB/EbfC family. In terms of assembly, homodimer.

Its subcellular location is the cytoplasm. It is found in the nucleoid. Functionally, binds to DNA and alters its conformation. May be involved in regulation of gene expression, nucleoid organization and DNA protection. The chain is Nucleoid-associated protein A1E_05550 from Rickettsia canadensis (strain McKiel).